We begin with the raw amino-acid sequence, 89 residues long: Three-finger toxin 3 (89 aa).

The N-terminal stretch at 1–16 is a signal peptide; that stretch reads MKTLLLILGVVAFVYL. Intrachain disulfides connect Cys24–Cys47, Cys40–Cys66, Cys70–Cys81, and Cys82–Cys87.

This sequence belongs to the three-finger toxin family. Ancestral subfamily. As to expression, expressed by the venom gland.

Its subcellular location is the secreted. This is Three-finger toxin 3 from Sistrurus catenatus edwardsii (Desert massasauga).